The sequence spans 876 residues: Bifunctional uridylyltransferase/uridylyl-removing enzyme (876 aa).

A uridylyltransferase region spans residues 1-332 (MPYQSPITFQ…NNGEEAEAVI (332 aa)). Residues 333 to 692 (IDDDFQRRGN…LSKKATRGGT (360 aa)) form a uridylyl-removing region. The HD domain maps to 451–573 (VDEHSIRLLK…VRDEERLEYL (123 aa)). ACT domains follow at residues 693–777 (EVFI…RIPR) and 800–876 (LMEF…PSAQ).

This sequence belongs to the GlnD family. The cofactor is Mg(2+).

It carries out the reaction [protein-PII]-L-tyrosine + UTP = [protein-PII]-uridylyl-L-tyrosine + diphosphate. It catalyses the reaction [protein-PII]-uridylyl-L-tyrosine + H2O = [protein-PII]-L-tyrosine + UMP + H(+). Its activity is regulated as follows. Uridylyltransferase (UTase) activity is inhibited by glutamine, while glutamine activates uridylyl-removing (UR) activity. Functionally, modifies, by uridylylation and deuridylylation, the PII regulatory proteins (GlnB and homologs), in response to the nitrogen status of the cell that GlnD senses through the glutamine level. Under low glutamine levels, catalyzes the conversion of the PII proteins and UTP to PII-UMP and PPi, while under higher glutamine levels, GlnD hydrolyzes PII-UMP to PII and UMP (deuridylylation). Thus, controls uridylylation state and activity of the PII proteins, and plays an important role in the regulation of nitrogen assimilation and metabolism. The sequence is that of Bifunctional uridylyltransferase/uridylyl-removing enzyme from Vibrio cholerae serotype O1 (strain ATCC 39315 / El Tor Inaba N16961).